A 463-amino-acid polypeptide reads, in one-letter code: Calcitonin gene-related peptide type 1 receptor (463 aa).

Residues 1–22 (MDKKHILCFLVLLPLNMALISA) form the signal peptide. At 23–138 (ESEEGVNQTD…STHEKVKTAL (116 aa)) the chain is on the extracellular side. Residues asparagine 29, asparagine 65, asparagine 117, asparagine 122, asparagine 127, and asparagine 128 are each glycosylated (N-linked (GlcNAc...) asparagine). Intrachain disulfides connect cysteine 47–cysteine 73, cysteine 64–cysteine 104, and cysteine 87–cysteine 126. A helical membrane pass occupies residues 139 to 163 (NLFYLTIIGHGLSIASLIISLIIFF). Residues 164–174 (YFKSLSCQRIT) lie on the Cytoplasmic side of the membrane. Residues 175-197 (LHKNLFFSFICNSIVTIIHLTAV) traverse the membrane as a helical segment. The Extracellular portion of the chain corresponds to 198 to 208 (ANNQALVATNP). Residues 209 to 237 (VSCKVSQFIHLYLMGCNYFWMLCEGVYLH) traverse the membrane as a helical segment. The Cytoplasmic segment spans residues 238-251 (TLIVVAVFAEKQHL). A helical membrane pass occupies residues 252–272 (MWYYFLGWGFPLLPACIHAIA). Residues 273 to 288 (RSLYYNDNCWISSDTH) are Extracellular-facing. Positions 287-288 (TH) are required for RAMP3 interaction. A helical transmembrane segment spans residues 289 to 313 (LLYIIHGPICAALLVNLFFLLNIVR). Residues 314-328 (VLITKLKVTHQVESN) lie on the Cytoplasmic side of the membrane. A helical transmembrane segment spans residues 329–350 (LYMKAVRATLILVPLLGIEFVL). The Extracellular portion of the chain corresponds to 351 to 365 (FPWRPEGKVAEEVYD). Residues 366–386 (YVMHILMHFQGLLVATIFCFF) traverse the membrane as a helical segment. Residues 387–463 (NGEVQAILRR…KSENMYDLVM (77 aa)) are Cytoplasmic-facing. Residues serine 419 and serine 444 each carry the phosphoserine modification.

It belongs to the G-protein coupled receptor 2 family. Heterodimer of CALCRL and RAMP1; the receptor complex functions as CGRP receptor. Heterodimer of CALCRL and RAMP2 or CALCRL and RAMP3; the complexes function as adrenomedullin receptor. Expressed predominantly in the lung, thymus, heart and brain.

The protein localises to the cell membrane. G protein-coupled receptor which specificity is determined by its interaction with receptor-activity-modifying proteins (RAMPs). Together with RAMP1, form the receptor complex for calcitonin-gene-related peptides CALCA/CGRP1 and CALCB/CGRP2. Together with RAMP2 or RAMP3, function as receptor complexes for adrenomedullin (ADM and ADM2). Ligand binding causes a conformation change that triggers signaling via guanine nucleotide-binding proteins (G proteins) and modulates the activity of downstream effectors. Activates cAMP-dependent pathway. The protein is Calcitonin gene-related peptide type 1 receptor of Mus musculus (Mouse).